Here is a 790-residue protein sequence, read N- to C-terminus: Penicillin-binding protein 1A (790 aa).

Residues 1–6 lie on the Cytoplasmic side of the membrane; sequence MYKSLL. Residues 7-27 traverse the membrane as a helical; Signal-anchor for type II membrane protein segment; the sequence is FCLKIFVFLILVGCGITAYII. The Periplasmic portion of the chain corresponds to 28–790; sequence YHYSRDLPDY…SKEDQSQEIY (763 aa). The segment at 49–220 is transglycosylase; the sequence is TRIYSRDGKL…SELNPERNYA (172 aa). The Proton donor; for transglycosylase activity role is filled by Glu87. The transpeptidase stretch occupies residues 398 to 711; it reads DVIVVEAIKE…SNVVLPIFID (314 aa). The Acyl-ester intermediate; for transpeptidase activity role is filled by Ser457.

In the N-terminal section; belongs to the glycosyltransferase 51 family. This sequence in the C-terminal section; belongs to the transpeptidase family.

The protein localises to the cell inner membrane. It carries out the reaction [GlcNAc-(1-&gt;4)-Mur2Ac(oyl-L-Ala-gamma-D-Glu-L-Lys-D-Ala-D-Ala)](n)-di-trans,octa-cis-undecaprenyl diphosphate + beta-D-GlcNAc-(1-&gt;4)-Mur2Ac(oyl-L-Ala-gamma-D-Glu-L-Lys-D-Ala-D-Ala)-di-trans,octa-cis-undecaprenyl diphosphate = [GlcNAc-(1-&gt;4)-Mur2Ac(oyl-L-Ala-gamma-D-Glu-L-Lys-D-Ala-D-Ala)](n+1)-di-trans,octa-cis-undecaprenyl diphosphate + di-trans,octa-cis-undecaprenyl diphosphate + H(+). The catalysed reaction is Preferential cleavage: (Ac)2-L-Lys-D-Ala-|-D-Ala. Also transpeptidation of peptidyl-alanyl moieties that are N-acyl substituents of D-alanine.. It functions in the pathway cell wall biogenesis; peptidoglycan biosynthesis. Cell wall formation. Synthesis of cross-linked peptidoglycan from the lipid intermediates. The enzyme has a penicillin-insensitive transglycosylase N-terminal domain (formation of linear glycan strands) and a penicillin-sensitive transpeptidase C-terminal domain (cross-linking of the peptide subunits). In Rickettsia conorii (strain ATCC VR-613 / Malish 7), this protein is Penicillin-binding protein 1A (mrcA).